The following is a 364-amino-acid chain: Deoxyribonuclease-2-alpha (364 aa).

A signal peptide spans 1–21; it reads MATLSPLLLAALLWVPVGTLT. Cysteines 22 and 161 form a disulfide. N-linked (GlcNAc...) asparagine glycosylation is found at N72, N88, N171, N214, N268, and N292. 2 cysteine pairs are disulfide-bonded: C269–C349 and C310–C329. The active site involves H297.

It belongs to the DNase II family.

Its subcellular location is the lysosome. It catalyses the reaction Endonucleolytic cleavage to nucleoside 3'-phosphates and 3'-phosphooligonucleotide end-products.. In terms of biological role, hydrolyzes DNA under acidic conditions with a preference for double-stranded DNA. Plays a major role in the clearance of nucleic acids generated through apoptosis, hence preventing autoinflammation. Necessary for proper fetal development and for definitive erythropoiesis in fetal liver and bone marrow, where it degrades nuclear DNA expelled from erythroid precursor cells. The sequence is that of Deoxyribonuclease-2-alpha (DNASE2) from Sus scrofa (Pig).